A 415-amino-acid chain; its full sequence is UDP-N-acetylglucosamine 1-carboxyvinyltransferase (415 aa).

22 to 23 provides a ligand contact to phosphoenolpyruvate; it reads KN. Position 92 (Arg-92) interacts with UDP-N-acetyl-alpha-D-glucosamine. Cys-116 acts as the Proton donor in catalysis. A 2-(S-cysteinyl)pyruvic acid O-phosphothioketal modification is found at Cys-116. Residues 121–125, Asp-304, and Val-326 contribute to the UDP-N-acetyl-alpha-D-glucosamine site; that span reads RPIDL.

Belongs to the EPSP synthase family. MurA subfamily.

The protein resides in the cytoplasm. The catalysed reaction is phosphoenolpyruvate + UDP-N-acetyl-alpha-D-glucosamine = UDP-N-acetyl-3-O-(1-carboxyvinyl)-alpha-D-glucosamine + phosphate. Its pathway is cell wall biogenesis; peptidoglycan biosynthesis. Cell wall formation. Adds enolpyruvyl to UDP-N-acetylglucosamine. The chain is UDP-N-acetylglucosamine 1-carboxyvinyltransferase from Halothermothrix orenii (strain H 168 / OCM 544 / DSM 9562).